A 426-amino-acid polypeptide reads, in one-letter code: Docking protein 3 (426 aa).

Residues 4-115 (PVKDGIIYVQ…WIEQLCQLAF (112 aa)) enclose the PH domain. Residues 145–249 (DLTEFPVLVL…ACQQQGQESP (105 aa)) form the IRS-type PTB domain. The interval 243-282 (QQGQESPQPSAQGLSNQPWGAEAEDPQCSPTLGRAHSGSH) is disordered. The span at 247-260 (ESPQPSAQGLSNQP) shows a compositional bias: polar residues. Tyr-331 carries the phosphotyrosine modification. Residues 357 to 426 (GCRQAPEGHS…RDGPGARDWS (70 aa)) form a disordered region. A compositionally biased stretch (basic residues) spans 402–411 (KPQRTLRAKL).

It belongs to the DOK family. Type A subfamily. In terms of assembly, homooligomer. Interacts with GRB2 and INPP5D/SHIP. In terms of processing, tyrosine-phosphorylated in the presence of GRB2.

It is found in the cytoplasm. The protein resides in the cell membrane. Functionally, DOK proteins are enzymatically inert adaptor or scaffolding proteins. They provide a docking platform for the assembly of multimolecular signaling complexes. Plays a role as negative regulator of the mobilization of calcium ions and of calcium signaling. The polypeptide is Docking protein 3 (DOK3) (Gallus gallus (Chicken)).